The chain runs to 202 residues: GTP cyclohydrolase 1 (202 aa).

The Zn(2+) site is built by cysteine 90, histidine 93, and cysteine 163.

This sequence belongs to the GTP cyclohydrolase I family. Homomer.

It catalyses the reaction GTP + H2O = 7,8-dihydroneopterin 3'-triphosphate + formate + H(+). It functions in the pathway cofactor biosynthesis; 7,8-dihydroneopterin triphosphate biosynthesis; 7,8-dihydroneopterin triphosphate from GTP: step 1/1. In Mycolicibacterium gilvum (strain PYR-GCK) (Mycobacterium gilvum (strain PYR-GCK)), this protein is GTP cyclohydrolase 1.